The sequence spans 152 residues: Transcriptional regulator MraZ (152 aa).

SpoVT-AbrB domains lie at 5–52 and 81–124; these read ANAV…PLPE and AVDL…NEDA.

It belongs to the MraZ family. As to quaternary structure, forms oligomers.

The protein localises to the cytoplasm. It is found in the nucleoid. The polypeptide is Transcriptional regulator MraZ (Azotobacter vinelandii (strain DJ / ATCC BAA-1303)).